The primary structure comprises 590 residues: Vesicular glutamate transporter 3 (590 aa).

Over 1 to 76 the chain is Cytoplasmic; the sequence is MPLGGFAGLK…CGCFGLPKRY (76 aa). Residues 77-97 traverse the membrane as a helical segment; sequence IIAMLSGLGFCISFGIRCNLG. At 98–130 the chain is on the vesicular side; that stretch reads VAIVEMVNNNTVYINGTAVMQPAQFNWDPETVG. Residues asparagine 106 and asparagine 112 are each glycosylated (N-linked (GlcNAc...) asparagine). The helical transmembrane segment at 131–151 threads the bilayer; sequence LIHGSFFWGYIVTQIPGGFIS. Residues 152–153 lie on the Cytoplasmic side of the membrane; sequence NK. The helical transmembrane segment at 154-174 threads the bilayer; sequence LAANRVFGAAIFLTSVLNMFI. Over 175 to 182 the chain is Vesicular; that stretch reads PSAARVHY. The helical transmembrane segment at 183–203 threads the bilayer; sequence GCVMFVRILQGLVEGVTYPAC. At 204–221 the chain is on the cytoplasmic side; that stretch reads HGMWSKWAPPLERSRLAT. The chain crosses the membrane as a helical span at residues 222-242; the sequence is TSFCGSYAGAVIAMPLAGILV. Residues 243–249 are Vesicular-facing; that stretch reads QYVGWPS. The chain crosses the membrane as a helical span at residues 250–270; sequence VFYIYGVFGIIWYIFWILLAY. Topologically, residues 271 to 315 are cytoplasmic; sequence NSPAVHPTISEEERNYIETSIGEGANLMSSTEKFKTPWREFFTSM. The chain crosses the membrane as a helical span at residues 316–336; sequence PVYAIIVANFCRSWTFYLLLI. The Vesicular segment spans residues 337–354; sequence SQPAYFEEVFGFPISKVG. A helical membrane pass occupies residues 355 to 375; it reads ILSAVPHMVMTIIVPIGGQLA. Topologically, residues 376–391 are cytoplasmic; it reads DFLRSRKILSTTTVRK. A helical transmembrane segment spans residues 392-412; it reads IMNCGGFGMEATLLLVVGFSH. The Vesicular segment spans residues 413-414; it reads TR. A helical membrane pass occupies residues 415 to 435; it reads AVAISFLILAVGFSGFAISGF. The Cytoplasmic segment spans residues 436–448; it reads NVNHLDIAPRYAS. The chain crosses the membrane as a helical span at residues 449–469; sequence ILMGISNGVGTLSGMVCPLIV. Topologically, residues 470–482 are vesicular; sequence GALTKHKTRLEWQ. Residues 483-503 form a helical membrane-spanning segment; it reads HVFVIASMVHYTGVIFYAIFA. The Cytoplasmic segment spans residues 504 to 587; sequence SGEKQDWADP…NHYENGEYQT (84 aa). The span at 526–535 shows a compositional bias: acidic residues; the sequence is EDELADETEP. A disordered region spans residues 526-590; sequence EDELADETEP…ENGEYQTQYQ (65 aa). Polar residues predominate over residues 536–557; that stretch reads SSDSGLATRQKTYGTTDNSSGR.

Belongs to the major facilitator superfamily. Sodium/anion cotransporter family. VGLUT subfamily.

The protein localises to the cytoplasmic vesicle. Its subcellular location is the secretory vesicle. It localises to the synaptic vesicle membrane. It is found in the cell membrane. The protein resides in the synapse. The protein localises to the synaptosome. The enzyme catalyses L-glutamate(out) = L-glutamate(in). The catalysed reaction is 3 Na(+)(out) + phosphate(out) = 3 Na(+)(in) + phosphate(in). It catalyses the reaction chloride(in) = chloride(out). With respect to regulation, the L-glutamate uniporter activity exhibits a biphasic dependence on chloride concentration. Chloride channel activity is allosterically activated by lumenal H(+) and Cl(-) leading to synaptic vesicles acidification. The glutamate transport activity is allosterically activated by lumenal H(+) and Cl(-), preventing non-vesicular L-glutamate release. In terms of biological role, multifunctional transporter that transports L-glutamate as well as multiple ions such as chloride, sodium and phosphate. At the synaptic vesicle membrane, mainly functions as an uniporter that mediates the uptake of L-glutamate into synaptic vesicles at presynaptic nerve terminals of excitatory neural cells. The L-glutamate uniporter activity is electrogenic and is driven by the proton electrochemical gradient, mainly by the electrical gradient established by the vacuolar H(+)-ATPase across the synaptic vesicle membrane. In addition, functions as a chloride channel that allows a chloride permeation through the synaptic vesicle membrane that affects the proton electrochemical gradient and promotes synaptic vesicles acidification. At the plasma membrane, following exocytosis, functions as a symporter of Na(+) and phosphate from the extracellular space to the cytoplasm allowing synaptic phosphate homeostasis regulation. The symporter activity is electrogenic. Moreover, operates synergistically with SLC18A3/VACHT under a constant H(+) gradient, thereby allowing striatal vesicular acetylcholine uptake. The protein is Vesicular glutamate transporter 3 of Danio rerio (Zebrafish).